We begin with the raw amino-acid sequence, 72 residues long: Keratin-associated protein 19-5 (72 aa).

Belongs to the KRTAP type 19 family. Interacts with hair keratins.

In the hair cortex, hair keratin intermediate filaments are embedded in an interfilamentous matrix, consisting of hair keratin-associated proteins (KRTAP), which are essential for the formation of a rigid and resistant hair shaft through their extensive disulfide bond cross-linking with abundant cysteine residues of hair keratins. The matrix proteins include the high-sulfur and high-glycine-tyrosine keratins. The sequence is that of Keratin-associated protein 19-5 (KRTAP19-5) from Homo sapiens (Human).